Here is a 399-residue protein sequence, read N- to C-terminus: P2X purinoceptor 1 (399 aa).

Topologically, residues 1–28 are cytoplasmic; it reads MARRLQDELSAFFFEYDTPRMVLVRNKK. The chain crosses the membrane as a helical span at residues 29 to 50; the sequence is VGVIFRLIQLVVLVYVIGWVFV. The Extracellular portion of the chain corresponds to 51-338; sequence YEKGYQTSSD…IPTMTTIGSG (288 aa). Lys68, Lys70, and Lys140 together coordinate CTP. Residue Lys70 participates in ATP binding. 3 cysteine pairs are disulfide-bonded: Cys117-Cys165, Cys126-Cys149, and Cys132-Cys159. 2 N-linked (GlcNAc...) asparagine glycosylation sites follow: Asn153 and Asn184. Residue Thr186 coordinates CTP. Residue Thr186 participates in ATP binding. A glycan (N-linked (GlcNAc...) asparagine) is linked at Asn210. 2 disulfide bridges follow: Cys217-Cys227 and Cys261-Cys270. Residues Ser286, Asn290, and Arg292 each coordinate ATP. Positions 290 and 292 each coordinate CTP. Asn300 carries an N-linked (GlcNAc...) asparagine glycan. Lys309 serves as a coordination point for CTP. An ATP-binding site is contributed by Lys309. The segment at 331-338 is pore-forming motif; the sequence is TMTTIGSG. The chain crosses the membrane as a helical span at residues 339 to 358; sequence IGIFGVATVLCDLLLLHILP. The Cytoplasmic segment spans residues 359–399; that stretch reads KRHYYKQKKFKYAEDMGPGEGEHDPVATSSTLGLQENMRTS. A disordered region spans residues 374 to 399; it reads MGPGEGEHDPVATSSTLGLQENMRTS. A compositionally biased stretch (polar residues) spans 385 to 399; sequence ATSSTLGLQENMRTS. Residues Ser387 and Ser388 each carry the phosphoserine modification. Thr389 is modified (phosphothreonine).

Belongs to the P2X receptor family. Functional P2XRs are organized as homomeric and heteromeric trimers. Homotrimer. Forms heterodimer with P2RX2. Forms heterodimer with P2RX4. Forms heterodimer with P2RX5. In terms of tissue distribution, high levels in vas deferens and urinary bladder. Lower extent in spinal cord, coeliac ganglion, lung and spleen (probably in the smooth muscle part of both organs).

It localises to the cell membrane. It catalyses the reaction Ca(2+)(in) = Ca(2+)(out). It carries out the reaction K(+)(in) = K(+)(out). The catalysed reaction is Na(+)(in) = Na(+)(out). Its activity is regulated as follows. Activated by low concentrations of ATP (&lt;1 uM). Undergoes rapid desensitisation. Sensitives to the ATP agonist:alpha/beta-methylene-ATP. Modulated by cholesterol. Its function is as follows. ATP-gated nonselective transmembrane cation channel permeable to potassium, sodium and with relatively high calcium permeability. Furthermore, CTP functions as a weak affinity agonist for P2RX1. Plays a role a role in urogenital, immune and cardiovascular function. Specifically, plays an important role in neurogenic contraction of smooth muscle of the vas deferens, and therefore is essential for normal male reproductive function. In addition, contributes to smooth muscle contractions of the urinary bladder. On platelets, contributes to platelet activation and aggregation and thereby, also to thrombosis. On neutrophils, it is involved in chemotaxis and in mitigating the activation of circulating cells. The sequence is that of P2X purinoceptor 1 (P2rx1) from Rattus norvegicus (Rat).